The following is a 135-amino-acid chain: Early nodulin-5 (135 aa).

The N-terminal stretch at 1–23 is a signal peptide; sequence MASSSSPIFLMIIFSMWLLFSYS.

Invasion zone and early symbiotic zone.

Its function is as follows. Involved in the infection process during the plant-rhizobium interaction. This chain is Early nodulin-5 (ENOD5), found in Pisum sativum (Garden pea).